A 561-amino-acid chain; its full sequence is Arginine--tRNA ligase (561 aa).

The short motif at 129 to 139 (ANPTGPLHVGH) is the 'HIGH' region element.

This sequence belongs to the class-I aminoacyl-tRNA synthetase family. As to quaternary structure, monomer.

Its subcellular location is the cytoplasm. It carries out the reaction tRNA(Arg) + L-arginine + ATP = L-arginyl-tRNA(Arg) + AMP + diphosphate. In Polaromonas sp. (strain JS666 / ATCC BAA-500), this protein is Arginine--tRNA ligase.